Here is a 198-residue protein sequence, read N- to C-terminus: RNA pyrophosphohydrolase (198 aa).

Positions 6–149 (GYRPNVGIVI…KKEVYRKAMK (144 aa)) constitute a Nudix hydrolase domain. Positions 38 to 59 (GGINDNESAEQAMYRELFEEVG) match the Nudix box motif.

Belongs to the Nudix hydrolase family. RppH subfamily. A divalent metal cation serves as cofactor.

Its function is as follows. Accelerates the degradation of transcripts by removing pyrophosphate from the 5'-end of triphosphorylated RNA, leading to a more labile monophosphorylated state that can stimulate subsequent ribonuclease cleavage. This is RNA pyrophosphohydrolase from Pasteurella multocida (strain Pm70).